The primary structure comprises 362 residues: Somatostatin receptor type 5 (362 aa).

Polar residues predominate over residues methionine 1–proline 10. The interval methionine 1–tryptophan 24 is disordered. Over methionine 1–alanine 35 the chain is Extracellular. Over residues serine 11–tryptophan 24 the composition is skewed to low complexity. 2 N-linked (GlcNAc...) asparagine glycosylation sites follow: asparagine 13 and asparagine 23. A helical membrane pass occupies residues arginine 36 to leucine 63. Over arginine 64–asparagine 73 the chain is Cytoplasmic. A helical transmembrane segment spans residues valine 74–valine 99. At serine 100–arginine 110 the chain is on the extracellular side. A disulfide bridge connects residues cysteine 109 and cysteine 184. A helical transmembrane segment spans residues leucine 111 to valine 132. Over aspartate 133 to lysine 154 the chain is Cytoplasmic. The helical transmembrane segment at leucine 155–alanine 175 threads the bilayer. Topologically, residues aspartate 176–tryptophan 195 are extracellular. A glycan (N-linked (GlcNAc...) asparagine) is linked at asparagine 185. A helical transmembrane segment spans residues glycine 196–leucine 220. Residues leucine 221–threonine 246 are Cytoplasmic-facing. The chain crosses the membrane as a helical span at residues arginine 247–alanine 272. Residues phenylalanine 273–alanine 282 lie on the Extracellular side of the membrane. Residues glycine 283–serine 307 traverse the membrane as a helical segment. The Cytoplasmic portion of the chain corresponds to aspartate 308–leucine 362. The S-palmitoyl cysteine; by ZDHHC5 moiety is linked to residue cysteine 319. The tract at residues aspartate 330–leucine 362 is disordered.

The protein belongs to the G-protein coupled receptor 1 family. Heterodimer with SSTR2. Heterodimerization with SSTR2 increases cell growth inhibition activity of SSTR2. Palmitoylated at Cys-319 by ZDHHC5, but not ZDHHC8. Palmitoylation creates an additional intracellular loop which is thought to be important for efficient coupling to G-proteins and may target the protein to lipid rafts. As to expression, expressed in adult brain but not in liver, heart, spleen, or kidney.

It is found in the cell membrane. In terms of biological role, receptor for somatostatin-28. The activity of this receptor is mediated by G proteins which inhibit adenylyl cyclase. Increases cell growth inhibition activity of SSTR2 following heterodimerization. The protein is Somatostatin receptor type 5 (Sstr5) of Mus musculus (Mouse).